A 139-amino-acid chain; its full sequence is Peptide methionine sulfoxide reductase MsrB (139 aa).

The region spanning 9–131 (TPSDNTEMTE…NSASLSFIDD (123 aa)) is the MsrB domain. Zn(2+) is bound by residues Cys-48, Cys-51, Cys-97, and Cys-100. Residue Cys-120 is the Nucleophile of the active site.

This sequence belongs to the MsrB Met sulfoxide reductase family. Zn(2+) is required as a cofactor.

It catalyses the reaction L-methionyl-[protein] + [thioredoxin]-disulfide + H2O = L-methionyl-(R)-S-oxide-[protein] + [thioredoxin]-dithiol. This Pectobacterium atrosepticum (strain SCRI 1043 / ATCC BAA-672) (Erwinia carotovora subsp. atroseptica) protein is Peptide methionine sulfoxide reductase MsrB.